The sequence spans 176 residues: MSRVAKAPVAIPAGVEVTLNEQTITVKGTKGSLTRVINSDVSVVVEDNEIKCSPVESAKTAAQAGTARALINNMVVGVTDGFVKKLQLVGVGYRAKLAGKDIDLTLGFSHPLVHKLPDGVTAECPSQTEIVLSGTDKQLIGQVAAEIRGYRPPEPYKGKGVRYADEQVRRKEAKKK.

Residues 151-170 show a composition bias toward basic and acidic residues; it reads RPPEPYKGKGVRYADEQVRR. Residues 151–176 are disordered; it reads RPPEPYKGKGVRYADEQVRRKEAKKK.

This sequence belongs to the universal ribosomal protein uL6 family. As to quaternary structure, part of the 50S ribosomal subunit.

Its function is as follows. This protein binds to the 23S rRNA, and is important in its secondary structure. It is located near the subunit interface in the base of the L7/L12 stalk, and near the tRNA binding site of the peptidyltransferase center. This chain is Large ribosomal subunit protein uL6, found in Shewanella pealeana (strain ATCC 700345 / ANG-SQ1).